The sequence spans 403 residues: MRVLVINSGSSSIKYQLIEMDGEKVLCKGIAERIGIEGSRLVHRVNDEKYVIERELPDHEEALKLILNTLVDEKLGVIKDLKEIDAVGHRVVHGGERFKESVLVDEEVLKAIEEVSPLAPLHNPANLMGIKAAMKLLPGVPNVVVFDTAFHQTIPQKAYLYAIPYEYYEKHRIRRYGFHGTSHRYVSKRAAEILGKKLEELKIITCHIGNGASVAAVKYGKCVDTSMGFTPLEGLVMGTRSGDLDPAIPFFIMEKEGISPQEMYDILNKKSGVYGLSKGFSSDMRDIEEAALKGDEWCKLILDIYHYRIAKYIGAYAAAMNGVDAIVFTAGVGENSPITREDVCSYLEFLGVKLDKQKNEETIRGKEGIISTLDSRVKVLVVPTNEELMIARDTKEIVEKIGR.

Position 7 (N7) interacts with Mg(2+). Residue K14 coordinates ATP. R90 serves as a coordination point for substrate. The active-site Proton donor/acceptor is the D147. ATP-binding positions include 207–211 (HIGNG), 283–285 (DMR), and 331–335 (GVGEN). E386 lines the Mg(2+) pocket.

The protein belongs to the acetokinase family. Homodimer. Mg(2+) is required as a cofactor. Requires Mn(2+) as cofactor.

It is found in the cytoplasm. The enzyme catalyses acetate + ATP = acetyl phosphate + ADP. It participates in metabolic intermediate biosynthesis; acetyl-CoA biosynthesis; acetyl-CoA from acetate: step 1/2. Catalyzes the formation of acetyl phosphate from acetate and ATP. Can also catalyze the reverse reaction. This Thermotoga sp. (strain RQ2) protein is Acetate kinase.